The chain runs to 102 residues: Protein translation factor SUI1 homolog (102 aa).

Belongs to the SUI1 family.

This Methanosarcina acetivorans (strain ATCC 35395 / DSM 2834 / JCM 12185 / C2A) protein is Protein translation factor SUI1 homolog.